The following is a 282-amino-acid chain: Putative phosphoenolpyruvate synthase regulatory protein (282 aa).

Residue 161–168 (GVSRSGKT) coordinates ADP.

The protein belongs to the pyruvate, phosphate/water dikinase regulatory protein family. PSRP subfamily.

The catalysed reaction is [pyruvate, water dikinase] + ADP = [pyruvate, water dikinase]-phosphate + AMP + H(+). It carries out the reaction [pyruvate, water dikinase]-phosphate + phosphate + H(+) = [pyruvate, water dikinase] + diphosphate. Its function is as follows. Bifunctional serine/threonine kinase and phosphorylase involved in the regulation of the phosphoenolpyruvate synthase (PEPS) by catalyzing its phosphorylation/dephosphorylation. The chain is Putative phosphoenolpyruvate synthase regulatory protein from Janthinobacterium sp. (strain Marseille) (Minibacterium massiliensis).